The following is a 161-amino-acid chain: SsrA-binding protein (161 aa).

Belongs to the SmpB family.

It localises to the cytoplasm. Required for rescue of stalled ribosomes mediated by trans-translation. Binds to transfer-messenger RNA (tmRNA), required for stable association of tmRNA with ribosomes. tmRNA and SmpB together mimic tRNA shape, replacing the anticodon stem-loop with SmpB. tmRNA is encoded by the ssrA gene; the 2 termini fold to resemble tRNA(Ala) and it encodes a 'tag peptide', a short internal open reading frame. During trans-translation Ala-aminoacylated tmRNA acts like a tRNA, entering the A-site of stalled ribosomes, displacing the stalled mRNA. The ribosome then switches to translate the ORF on the tmRNA; the nascent peptide is terminated with the 'tag peptide' encoded by the tmRNA and targeted for degradation. The ribosome is freed to recommence translation, which seems to be the essential function of trans-translation. This chain is SsrA-binding protein, found in Vibrio campbellii (strain ATCC BAA-1116).